Consider the following 94-residue polypeptide: Transcription factor CPC (94 aa).

Positions Met-1–Met-10 are S1, required for cell-to-cell movements. The span at Met-1–Asp-11 shows a compositional bias: basic and acidic residues. The interval Met-1–Ser-25 is disordered. The Myb-like domain maps to Ser-30–His-80. Residues Trp-76–Lys-79 form an S2, required for cell-to-cell movements and nuclear localization region.

Interacts with GL3 and BHLH2. Interacts with SIEL. As to expression, expressed in trichomes and in young developing leaves, as well as in root hair and stele cells (pericycle and vascular tissues). Expressed in epidermal root hairless cells (atrichoblasts) and moves to root hair cells (trichoblasts) by a cell-to-cell movement through plasmodesmata (at protein level).

It localises to the nucleus. Functionally, transcription factor. Determines the fate of epidermal cell differentiation. Represses trichome development by lateral inhibition. Together with GL3 or BHLH2, promotes the formation of hair developing cells (H position) in root epidermis, probably by inhibiting non-hair cell formation. Represses the expression of GL2 and WER in H cells. Positively regulates stomatal formation in the hypocotyl. This chain is Transcription factor CPC (CPC), found in Arabidopsis thaliana (Mouse-ear cress).